Reading from the N-terminus, the 286-residue chain is UPF0761 membrane protein KPK_5501 (286 aa).

Transmembrane regions (helical) follow at residues 44–64 (LLSL…FPMF), 74–94 (FIFA…IEQF), 104–124 (VGAF…DSAL), 140–160 (FAVY…SLAI), 183–203 (LFPL…VPTT), 210–230 (AVIG…AFAL), and 244–264 (VISV…IVLL).

The protein belongs to the UPF0761 family.

It localises to the cell inner membrane. The protein is UPF0761 membrane protein KPK_5501 of Klebsiella pneumoniae (strain 342).